The primary structure comprises 23 residues: Laccase-1 (23 aa).

This sequence belongs to the multicopper oxidase family. Cu cation serves as cofactor.

It localises to the secreted. It carries out the reaction 4 hydroquinone + O2 = 4 benzosemiquinone + 2 H2O. Strongly inhibited by sodium azide, sodium cyanide, Li(+), Sn(+), Hg(2+), and the disulfide-reducing agents beta-mercaptoethanol, dithiothreitol and thioglycolic acid. Moderately inhibited by Mn(2+) and Fe(2+), inhibition by these metal ions is stronger at 0.1 mM than at 1 mM. Moderately inhibited by Cu(2+). In terms of biological role, lignin degradation and detoxification of lignin-derived products. Demethylates eucalyptus hard wood lignin. Has high activity against the non-phenolic heterocyclic compound ABTS, and lower activity against the phenolic substrates syringic acid, caffeic acid, syringaldazine, vanillic acid, catechol and levodihydroxyphenylalanine. In Galerina sp, this protein is Laccase-1.